A 439-amino-acid chain; its full sequence is GTPase Der (439 aa).

EngA-type G domains follow at residues 4–169 (AMVS…PQEE) and 177–352 (IKIA…EEYN). GTP contacts are provided by residues 10-17 (GRPNVGKS), 57-61 (DTGGL), 120-123 (NKVD), 183-190 (GKPNVGKS), 230-234 (DTAGI), and 295-298 (NKWD). Residues 353 to 437 (KRITTGLLNN…PVVISTRKRG (85 aa)) form the KH-like domain.

Belongs to the TRAFAC class TrmE-Era-EngA-EngB-Septin-like GTPase superfamily. EngA (Der) GTPase family. Associates with the 50S ribosomal subunit.

Its function is as follows. GTPase that plays an essential role in the late steps of ribosome biogenesis. The protein is GTPase Der of Thermoanaerobacter pseudethanolicus (strain ATCC 33223 / 39E) (Clostridium thermohydrosulfuricum).